The chain runs to 41 residues: MKCSLLLVVFAAMVALFAAGTNAAMNQRKMLEVIGGLKKEK.

An N-terminal signal peptide occupies residues 1–23 (MKCSLLLVVFAAMVALFAAGTNA).

The protein belongs to the caterpillar 4 family. In terms of tissue distribution, expressed by the venom apparatus.

Its subcellular location is the secreted. Probable toxin. This chain is U-megalopygitoxin(4)-Mo5, found in Megalopyge opercularis (Southern flannel moth).